A 351-amino-acid chain; its full sequence is Prostaglandin reductase 2 (351 aa).

Residue 99–100 (FY) participates in substrate binding. NADP(+)-binding positions include 165–168 (GACG), K192, Y208, N231, 253–259 (CGQISQY), 287–289 (FLV), and N337. 288–290 (LVL) lines the substrate pocket.

The protein belongs to the NADP-dependent oxidoreductase L4BD family. In terms of assembly, monomer.

It is found in the cytoplasm. It carries out the reaction 13,14-dihydro-15-oxo-prostaglandin E2 + NAD(+) = 15-oxoprostaglandin E2 + NADH + H(+). The enzyme catalyses 13,14-dihydro-15-oxo-prostaglandin E2 + NADP(+) = 15-oxoprostaglandin E2 + NADPH + H(+). It catalyses the reaction 13,14-dihydro-15-oxo-PGF2alpha + NADP(+) = 15-oxoprostaglandin F2alpha + NADPH + H(+). The catalysed reaction is 13,14-dihydro-15-oxo-prostaglandin E1 + NADP(+) = 15-oxoprostaglandin E1 + NADPH + H(+). It carries out the reaction 13,14-dihydro-15-oxo-prostaglandin F1alpha + NADP(+) = 15-oxoprostaglandin F1alpha + NADPH + H(+). Functionally, functions as 15-oxo-prostaglandin 13-reductase and acts on 15-keto-PGE1, 15-keto-PGE2, 15-keto-PGE1-alpha and 15-keto-PGE2-alpha with highest activity towards 15-keto-PGE2. Overexpression represses transcriptional activity of PPARG and inhibits adipocyte differentiation. This is Prostaglandin reductase 2 (PTGR2) from Pongo abelii (Sumatran orangutan).